A 60-amino-acid chain; its full sequence is Toxin S4C8 (60 aa).

Cystine bridges form between Cys3/Cys22, Cys17/Cys39, Cys41/Cys52, and Cys53/Cys58. The interval 41 to 48 (CPTAMWPY) is important for binding to L-type calcium channels.

This sequence belongs to the three-finger toxin family. Short-chain subfamily. L-type calcium blocker sub-subfamily. As to expression, expressed by the venom gland.

The protein localises to the secreted. Functionally, this specific blocker of the L-type calcium channel (Cav1/CACNA1) is a smooth muscle relaxant and an inhibitor of cardiac contractions. In Dendroaspis jamesoni kaimosae (Eastern Jameson's mamba), this protein is Toxin S4C8.